A 119-amino-acid chain; its full sequence is Aspartate 1-decarboxylase (119 aa).

Ser-25 functions as the Schiff-base intermediate with substrate; via pyruvic acid in the catalytic mechanism. Position 25 is a pyruvic acid (Ser) (Ser-25). Thr-57 is a substrate binding site. Residue Tyr-58 is the Proton donor of the active site. Residue 73–75 (GAA) coordinates substrate.

The protein belongs to the PanD family. In terms of assembly, heterooctamer of four alpha and four beta subunits. It depends on pyruvate as a cofactor. In terms of processing, is synthesized initially as an inactive proenzyme, which is activated by self-cleavage at a specific serine bond to produce a beta-subunit with a hydroxyl group at its C-terminus and an alpha-subunit with a pyruvoyl group at its N-terminus.

The protein resides in the cytoplasm. It carries out the reaction L-aspartate + H(+) = beta-alanine + CO2. It participates in cofactor biosynthesis; (R)-pantothenate biosynthesis; beta-alanine from L-aspartate: step 1/1. Catalyzes the pyruvoyl-dependent decarboxylation of aspartate to produce beta-alanine. This is Aspartate 1-decarboxylase from Herminiimonas arsenicoxydans.